The following is a 333-amino-acid chain: Glycerol-3-phosphate dehydrogenase [NAD(P)+] (333 aa).

The NADPH site is built by Ser10, Trp11, and Lys105. Sn-glycerol 3-phosphate is bound by residues Lys105, Gly136, and Thr138. Ala140 is a binding site for NADPH. Positions 191, 244, 254, 255, and 256 each coordinate sn-glycerol 3-phosphate. Catalysis depends on Lys191, which acts as the Proton acceptor. Residue Arg255 coordinates NADPH. Positions 279 and 281 each coordinate NADPH.

The protein belongs to the NAD-dependent glycerol-3-phosphate dehydrogenase family.

The protein localises to the cytoplasm. It catalyses the reaction sn-glycerol 3-phosphate + NAD(+) = dihydroxyacetone phosphate + NADH + H(+). The enzyme catalyses sn-glycerol 3-phosphate + NADP(+) = dihydroxyacetone phosphate + NADPH + H(+). It functions in the pathway membrane lipid metabolism; glycerophospholipid metabolism. Its function is as follows. Catalyzes the reduction of the glycolytic intermediate dihydroxyacetone phosphate (DHAP) to sn-glycerol 3-phosphate (G3P), the key precursor for phospholipid synthesis. In Syntrophotalea carbinolica (strain DSM 2380 / NBRC 103641 / GraBd1) (Pelobacter carbinolicus), this protein is Glycerol-3-phosphate dehydrogenase [NAD(P)+].